The chain runs to 147 residues: uncharacterized protein (147 aa).

Residues 44 to 147 (LVGYIDKEIH…LKSIKERLSI (104 aa)) enclose the HTH LytTR-type domain.

It is found in the cytoplasm. This is an uncharacterized protein from Staphylococcus aureus (strain Mu50 / ATCC 700699).